The sequence spans 391 residues: Nucleosome assembly protein 1-like 1 (391 aa).

A compositionally biased stretch (basic and acidic residues) spans 1–10 (MADIDNKEQS). Positions 1-32 (MADIDNKEQSELDQDLDDVEEVEEEETGEETK) are disordered. A2 carries the N-acetylalanine modification. The residue at position 10 (S10) is a Phosphoserine. The span at 11-28 (ELDQDLDDVEEVEEEETG) shows a compositional bias: acidic residues. Phosphothreonine is present on residues T62 and T64. Position 69 is a phosphoserine (S69). K116 carries the post-translational modification N6-acetyllysine. Residues 125 to 150 (YEPTEEECEWKPDEEDEISEELKEKA) carry the NAP1L motif motif. Over residues 132-143 (CEWKPDEEDEIS) the composition is skewed to acidic residues. A disordered region spans residues 132-163 (CEWKPDEEDEISEELKEKAKIEDEKKDEEKED). Residue S143 is modified to Phosphoserine. Residues 144 to 163 (EELKEKAKIEDEKKDEEKED) show a composition bias toward basic and acidic residues. The Nuclear localization signal signature appears at 273 to 279 (IKKKQKH). A compositionally biased stretch (acidic residues) spans 346-376 (AIEDDDDDYDEEGEEADEEGEEEGDEENDPD). Positions 346–391 (AIEDDDDDYDEEGEEADEEGEEEGDEENDPDYDPKKDQNPAECKQQ) are disordered. E359 and E360 each carry 5-glutamyl polyglycine. Residues 377-391 (YDPKKDQNPAECKQQ) show a composition bias toward basic and acidic residues. At C388 the chain carries Cysteine methyl ester. Residue C388 is the site of S-farnesyl cysteine attachment. The propeptide at 389–391 (KQQ) is removed in mature form.

The protein belongs to the nucleosome assembly protein (NAP) family. In terms of assembly, homodimer. The dimer binds strongly and sequentially to single and double H2A-H2B heterodimers. Interacts with ERCC6; this interaction increases ERCC6 processivity. Interacts with RAD54. Interacts with SETD1A. In terms of processing, polyglycylated by TTLL10 on glutamate residues, resulting in polyglycine chains on the gamma-carboxyl group. Both polyglutamylation and polyglycylation modifications can coexist on the same protein on adjacent residues, and lowering polyglycylation levels increases polyglutamylation, and reciprocally. Post-translationally, polyglutamylated by TTLL4 on glutamate residues, resulting in polyglutamate chains on the gamma-carboxyl group. Both polyglutamylation and polyglycylation modifications can coexist on the same protein on adjacent residues, and lowering polyglycylation levels increases polyglutamylation, and reciprocally.

Its subcellular location is the nucleus. It localises to the melanosome. The protein resides in the cytoplasm. Functionally, histone chaperone that plays a role in the nuclear import of H2A-H2B and nucleosome assembly. Also participates in several important DNA repair mechanisms: greatly enhances ERCC6-mediated chromatin remodeling which is essential for transcription-coupled nucleotide excision DNA repair. Also stimulates homologous recombination (HR) by RAD51 and RAD54 which is essential in mitotic DNA double strand break (DSB) repair. Plays a key role in the regulation of embryonic neurogenesis. Promotes the proliferation of neural progenitors and inhibits neuronal differentiation during cortical development. Regulates neurogenesis via the modulation of RASSF10; regulates RASSF10 expression by promoting SETD1A-mediated H3K4 methylation at the RASSF10 promoter. The protein is Nucleosome assembly protein 1-like 1 (NAP1L1) of Pongo abelii (Sumatran orangutan).